Reading from the N-terminus, the 331-residue chain is Anthranilate phosphoribosyltransferase (331 aa).

5-phospho-alpha-D-ribose 1-diphosphate-binding positions include glycine 79, 82–83, serine 87, 89–92, 107–115, and serine 119; these read GD, NIST, and KHCNSSISG. Glycine 79 contributes to the anthranilate binding site. Serine 91 serves as a coordination point for Mg(2+). Asparagine 110 provides a ligand contact to anthranilate. Position 165 (arginine 165) interacts with anthranilate. Aspartate 223 and glutamate 224 together coordinate Mg(2+).

Belongs to the anthranilate phosphoribosyltransferase family. Homodimer. Requires Mg(2+) as cofactor.

The enzyme catalyses N-(5-phospho-beta-D-ribosyl)anthranilate + diphosphate = 5-phospho-alpha-D-ribose 1-diphosphate + anthranilate. The protein operates within amino-acid biosynthesis; L-tryptophan biosynthesis; L-tryptophan from chorismate: step 2/5. Catalyzes the transfer of the phosphoribosyl group of 5-phosphorylribose-1-pyrophosphate (PRPP) to anthranilate to yield N-(5'-phosphoribosyl)-anthranilate (PRA). The sequence is that of Anthranilate phosphoribosyltransferase from Buchnera aphidicola subsp. Melaphis rhois.